The following is a 482-amino-acid chain: Cytochrome c-552 (482 aa).

The signal sequence occupies residues Met-1–Ala-26. A heme c-binding site is contributed by His-98. Residues Cys-126, Cys-129, and Lys-130 each contribute to the heme site. Heme c contacts are provided by Cys-164, Cys-167, His-168, Cys-213, Cys-216, and His-217. Residues Glu-219, Tyr-220, Lys-265, and Gln-267 each contribute to the Ca(2+) site. A substrate-binding site is contributed by Tyr-220. Residue His-268 coordinates substrate. Heme c-binding residues include His-279, Cys-286, Cys-289, His-290, His-305, Cys-318, Cys-321, His-322, and His-397.

Belongs to the cytochrome c-552 family. It depends on Ca(2+) as a cofactor. Requires heme c as cofactor.

The protein localises to the periplasm. It carries out the reaction 6 Fe(III)-[cytochrome c] + NH4(+) + 2 H2O = 6 Fe(II)-[cytochrome c] + nitrite + 8 H(+). It participates in nitrogen metabolism; nitrate reduction (assimilation). Its function is as follows. Catalyzes the reduction of nitrite to ammonia, consuming six electrons in the process. This is Cytochrome c-552 from Edwardsiella ictaluri (strain 93-146).